Consider the following 690-residue polypeptide: MGTVSSRRSWWPLPLLLLLLLGPAGARAQEDEDGDYEELVLALRSEEDGLAEAPEHGATATFHRCAKDPWRLPGTYVVVLKEETHRSQSERTARRLQAQAARRGYLTKILHVFHDLLPGFLVKMSGDLLELALKLPHVDYIEEDSSVFAQSIPWNLERITPPRYRADEYQPPDGGSLVEVYLLDTSIQSDHREIEGRVMVTDFENVPEEDGTRFHRQASKCDSHGTHLAGVVSGRDAGVAKGASMRSLRVLNCQGKGTVSGTLIGLEFIRKSQLVQPVGPLVVLMPLAGGYSRVLNAACQRLARAGVVLVTAAGNFRDDACLYSPASAPEVITVGATNAQDQPVTLGTLGTNFGRCVDLFAPGEDIIGASSDCSTCFVSQSGTSQAAAHVAGIAAMMLSVEPELTLAELRQRLIHFSAKDVINEVWFPEDQRVLTPNLVAALPPSTHGAGWQLFCRTVWSAHSGPTRMATAIARCAPDEELLSCSSFSRSGKRRGERMEAQGGKLVCRAHNAFGGEGVCAIARCCLLPQANCSVHTAPPAGSGMGTRVLCHQQVHVLTGCSSHWEVEDLGTHKPPVLRPRGQPNQCVGHREASIHASCCRAPGLECKVKEHGIPAPQEQVTVACEEGWTLTGCSALPGTSHVLGAYAVDNTCVVRSRDISTTGSTSEEAMAAVAICCRRRHLAQASQELQ.

The signal sequence occupies residues 1–28 (MGTVSSRRSWWPLPLLLLLLLGPAGARA). A propeptide spanning residues 29 to 150 (QEDEDGDYEE…IEEDSSVFAQ (122 aa)) is cleaved from the precursor. Sulfotyrosine is present on tyrosine 36. Phosphoserine is present on serine 45. Positions 75–147 (TYVVVLKEET…VDYIEEDSSV (73 aa)) constitute an Inhibitor I9 domain. One can recognise a Peptidase S8 domain in the interval 153 to 459 (PWNLERITPP…GWQLFCRTVW (307 aa)). Catalysis depends on charge relay system residues aspartate 184 and histidine 224. 2 cysteine pairs are disulfide-bonded: cysteine 221-cysteine 253 and cysteine 321-cysteine 356. Serine 384 acts as the Charge relay system in catalysis. A C-terminal domain region spans residues 448–690 (GAGWQLFCRT…HLAQASQELQ (243 aa)). Cystine bridges form between cysteine 455/cysteine 525, cysteine 475/cysteine 524, and cysteine 484/cysteine 507. The N-linked (GlcNAc...) asparagine glycan is linked to asparagine 531. 6 disulfide bridges follow: cysteine 532–cysteine 599, cysteine 550–cysteine 598, cysteine 560–cysteine 586, cysteine 606–cysteine 677, cysteine 624–cysteine 676, and cysteine 633–cysteine 652. Serine 686 bears the Phosphoserine mark.

The protein belongs to the peptidase S8 family. In terms of assembly, monomer. Can self-associate to form dimers and higher multimers which may have increased LDLR degrading activity. The precursor protein but not the mature protein may form multimers. Interacts with APOB, VLDLR, LRP8/APOER2 and BACE1. The full-length immature form (pro-PCSK9) interacts with SCNN1A, SCNN1B and SCNN1G. The pro-PCSK9 form (via C-terminal domain) interacts with LDLR. Interacts (via the C-terminal domain) with ANXA2 (via repeat Annexin 1); the interaction inhibits the degradation of LDLR. It depends on Ca(2+) as a cofactor. In terms of processing, cleavage by furin and PCSK5 generates a truncated inactive protein that is unable to induce LDLR degradation. Post-translationally, undergoes autocatalytic cleavage in the endoplasmic reticulum to release the propeptide from the N-terminus and the cleavage of the propeptide is strictly required for its maturation and activation. The cleaved propeptide however remains associated with the catalytic domain through non-covalent interactions, preventing potential substrates from accessing its active site. As a result, it is secreted from cells as a propeptide-containing, enzymatically inactive protein. Phosphorylation protects the propeptide against proteolysis.

The protein localises to the cytoplasm. It localises to the secreted. The protein resides in the endosome. Its subcellular location is the lysosome. It is found in the cell surface. The protein localises to the endoplasmic reticulum. It localises to the golgi apparatus. With respect to regulation, its proteolytic activity is autoinhibited by the non-covalent binding of the propeptide to the catalytic domain. Inhibited by EGTA. Functionally, crucial player in the regulation of plasma cholesterol homeostasis. Binds to low-density lipid receptor family members: low density lipoprotein receptor (LDLR), very low density lipoprotein receptor (VLDLR), apolipoprotein E receptor (LRP1/APOER) and apolipoprotein receptor 2 (LRP8/APOER2), and promotes their degradation in intracellular acidic compartments. Acts via a non-proteolytic mechanism to enhance the degradation of the hepatic LDLR through a clathrin LDLRAP1/ARH-mediated pathway. May prevent the recycling of LDLR from endosomes to the cell surface or direct it to lysosomes for degradation. Can induce ubiquitination of LDLR leading to its subsequent degradation. Inhibits intracellular degradation of APOB via the autophagosome/lysosome pathway in a LDLR-independent manner. Involved in the disposal of non-acetylated intermediates of BACE1 in the early secretory pathway. Inhibits epithelial Na(+) channel (ENaC)-mediated Na(+) absorption by reducing ENaC surface expression primarily by increasing its proteasomal degradation. Regulates neuronal apoptosis via modulation of LRP8/APOER2 levels and related anti-apoptotic signaling pathways. In Pongo pygmaeus (Bornean orangutan), this protein is Proprotein convertase subtilisin/kexin type 9 (PCSK9).